Consider the following 60-residue polypeptide: Potassium channel toxin alpha-KTx 3.6 (60 aa).

An N-terminal signal peptide occupies residues 1-22 (MKVFFAVLITLFICSMIIGIHG). Disulfide bonds link Cys29/Cys49, Cys35/Cys54, and Cys39/Cys56. Lys59 is subject to Lysine amide.

It belongs to the short scorpion toxin superfamily. Potassium channel inhibitor family. Alpha-KTx 03 subfamily. Expressed by the venom gland.

Its subcellular location is the secreted. In terms of biological role, blocks voltage-gated potassium channels. At 2 uM, blocks rat Kv1.1/KCNA1 and Kv1.3/KCNA3, has a strong effect on rat Kv1.2/KCNA2 and Kv1.6/KCNA6 as well as a moderate effect on Shaker IR. The chain is Potassium channel toxin alpha-KTx 3.6 from Olivierus martensii (Manchurian scorpion).